Reading from the N-terminus, the 243-residue chain is Pyridoxine 5'-phosphate synthase (243 aa).

Asparagine 9 contacts 3-amino-2-oxopropyl phosphate. 11–12 (DH) contacts 1-deoxy-D-xylulose 5-phosphate. Residue arginine 20 participates in 3-amino-2-oxopropyl phosphate binding. Histidine 45 acts as the Proton acceptor in catalysis. 1-deoxy-D-xylulose 5-phosphate contacts are provided by arginine 47 and histidine 52. Glutamate 72 (proton acceptor) is an active-site residue. Threonine 102 lines the 1-deoxy-D-xylulose 5-phosphate pocket. The Proton donor role is filled by histidine 193. 3-amino-2-oxopropyl phosphate-binding positions include glycine 194 and 215–216 (GH).

Belongs to the PNP synthase family. As to quaternary structure, homooctamer; tetramer of dimers.

The protein resides in the cytoplasm. The catalysed reaction is 3-amino-2-oxopropyl phosphate + 1-deoxy-D-xylulose 5-phosphate = pyridoxine 5'-phosphate + phosphate + 2 H2O + H(+). The protein operates within cofactor biosynthesis; pyridoxine 5'-phosphate biosynthesis; pyridoxine 5'-phosphate from D-erythrose 4-phosphate: step 5/5. Catalyzes the complicated ring closure reaction between the two acyclic compounds 1-deoxy-D-xylulose-5-phosphate (DXP) and 3-amino-2-oxopropyl phosphate (1-amino-acetone-3-phosphate or AAP) to form pyridoxine 5'-phosphate (PNP) and inorganic phosphate. This is Pyridoxine 5'-phosphate synthase from Shigella sonnei (strain Ss046).